The sequence spans 133 residues: Transcription antitermination protein NusB (133 aa).

Belongs to the NusB family.

Its function is as follows. Involved in transcription antitermination. Required for transcription of ribosomal RNA (rRNA) genes. Binds specifically to the boxA antiterminator sequence of the ribosomal RNA (rrn) operons. This chain is Transcription antitermination protein NusB, found in Pediococcus pentosaceus (strain ATCC 25745 / CCUG 21536 / LMG 10740 / 183-1w).